A 470-amino-acid polypeptide reads, in one-letter code: Glutamate--tRNA ligase (470 aa).

The 'HIGH' region motif lies at 9–19 (PSPTGFLHVGG). The short motif at 236–240 (RLSKR) is the 'KMSKS' region element. ATP is bound at residue K239.

It belongs to the class-I aminoacyl-tRNA synthetase family. Glutamate--tRNA ligase type 1 subfamily. As to quaternary structure, monomer.

It is found in the cytoplasm. The enzyme catalyses tRNA(Glu) + L-glutamate + ATP = L-glutamyl-tRNA(Glu) + AMP + diphosphate. Catalyzes the attachment of glutamate to tRNA(Glu) in a two-step reaction: glutamate is first activated by ATP to form Glu-AMP and then transferred to the acceptor end of tRNA(Glu). This Legionella pneumophila (strain Lens) protein is Glutamate--tRNA ligase.